A 326-amino-acid chain; its full sequence is MQKKRVFSGIQPTGQIHLGNYLGAIKHWVELQDEYENLFCIVNSHAITLPIEPIFLKSQTYELVKLLLACGISPKQSGLFIQSEVDEHPALAWLLDCQVSMGEMQRMTQFKDKSLKNPKSVNVGLFNYPILMASDILLYQSDLVPVGEDQKQHLELTRNVAEKFNRDFGNCFKVPEPLIAKVGARVMGLDDPKVKMSKSHKGANHAIFLLDEPDVIVKKIKKAATDSMGVIAFDETREGVFNLLNIYMLLSDESPEKIEERFRNKGYGDFKKELAEVVIQSLKPIQERYQEISDDEVKAVLNCGAEKARPLARATYQKAKELMGLI.

Residues Gln-11–Thr-13 and Gly-19–Asn-20 each bind ATP. Positions Pro-12 to Asn-20 match the 'HIGH' region motif. Residue Asp-135 coordinates L-tryptophan. ATP contacts are provided by residues Gly-147 to Asp-149, Val-186, and Lys-195 to Ser-199. The 'KMSKS' region signature appears at Lys-195 to Ser-199.

It belongs to the class-I aminoacyl-tRNA synthetase family. As to quaternary structure, homodimer.

The protein localises to the cytoplasm. The catalysed reaction is tRNA(Trp) + L-tryptophan + ATP = L-tryptophyl-tRNA(Trp) + AMP + diphosphate + H(+). In terms of biological role, catalyzes the attachment of tryptophan to tRNA(Trp). In Helicobacter pylori (strain J99 / ATCC 700824) (Campylobacter pylori J99), this protein is Tryptophan--tRNA ligase.